The sequence spans 157 residues: MRILGIDPGSRKCGYAIISHASNKLSLITAGFINITTTRLQEQILDLIEALDCLLDRYEVNEVAIEDIFFGYNPKSVIKLAQFRGALSLKILERIGNFSEYTPLQVKKALTGNGKAAKEQVAFMVKRLLNITSEIKPLDISDAIAVAITHAQRLKPR.

Active-site residues include Asp-7, Glu-66, and Asp-139. Mg(2+) is bound by residues Asp-7, Glu-66, and Asp-139.

The protein belongs to the RuvC family. In terms of assembly, homodimer which binds Holliday junction (HJ) DNA. The HJ becomes 2-fold symmetrical on binding to RuvC with unstacked arms; it has a different conformation from HJ DNA in complex with RuvA. In the full resolvosome a probable DNA-RuvA(4)-RuvB(12)-RuvC(2) complex forms which resolves the HJ. The cofactor is Mg(2+).

It localises to the cytoplasm. It catalyses the reaction Endonucleolytic cleavage at a junction such as a reciprocal single-stranded crossover between two homologous DNA duplexes (Holliday junction).. The RuvA-RuvB-RuvC complex processes Holliday junction (HJ) DNA during genetic recombination and DNA repair. Endonuclease that resolves HJ intermediates. Cleaves cruciform DNA by making single-stranded nicks across the HJ at symmetrical positions within the homologous arms, yielding a 5'-phosphate and a 3'-hydroxyl group; requires a central core of homology in the junction. The consensus cleavage sequence is 5'-(A/T)TT(C/G)-3'. Cleavage occurs on the 3'-side of the TT dinucleotide at the point of strand exchange. HJ branch migration catalyzed by RuvA-RuvB allows RuvC to scan DNA until it finds its consensus sequence, where it cleaves and resolves the cruciform DNA. The polypeptide is Crossover junction endodeoxyribonuclease RuvC (Helicobacter pylori (strain J99 / ATCC 700824) (Campylobacter pylori J99)).